The sequence spans 337 residues: Glyceraldehyde-3-phosphate dehydrogenase, cytosolic (337 aa).

NAD(+)-binding positions include 13-14 (RI), D35, and R82. Residues 153-155 (SCT), T184, 213-214 (TG), and R236 each bind D-glyceraldehyde 3-phosphate. The active-site Nucleophile is C154. Residue N318 participates in NAD(+) binding.

The protein belongs to the glyceraldehyde-3-phosphate dehydrogenase family. As to quaternary structure, homotetramer.

It is found in the cytoplasm. The catalysed reaction is D-glyceraldehyde 3-phosphate + phosphate + NAD(+) = (2R)-3-phospho-glyceroyl phosphate + NADH + H(+). The protein operates within carbohydrate degradation; glycolysis; pyruvate from D-glyceraldehyde 3-phosphate: step 1/5. In terms of biological role, key enzyme in glycolysis that catalyzes the first step of the pathway by converting D-glyceraldehyde 3-phosphate (G3P) into 3-phospho-D-glyceroyl phosphate. Essential for the maintenance of cellular ATP levels and carbohydrate metabolism. This Antirrhinum majus (Garden snapdragon) protein is Glyceraldehyde-3-phosphate dehydrogenase, cytosolic (GAPC).